A 449-amino-acid polypeptide reads, in one-letter code: Glucose-6-phosphate isomerase (449 aa).

The Proton donor role is filled by E291. Residues H312 and K426 contribute to the active site.

The protein belongs to the GPI family.

The protein localises to the cytoplasm. It catalyses the reaction alpha-D-glucose 6-phosphate = beta-D-fructose 6-phosphate. It functions in the pathway carbohydrate biosynthesis; gluconeogenesis. It participates in carbohydrate degradation; glycolysis; D-glyceraldehyde 3-phosphate and glycerone phosphate from D-glucose: step 2/4. Functionally, catalyzes the reversible isomerization of glucose-6-phosphate to fructose-6-phosphate. This Streptococcus pyogenes serotype M3 (strain ATCC BAA-595 / MGAS315) protein is Glucose-6-phosphate isomerase.